Here is a 363-residue protein sequence, read N- to C-terminus: Adenosine deaminase (363 aa).

Residues His42 and His44 each contribute to the Zn(2+) site. A purine D-ribonucleoside is bound by residues 44–46, Asp172, and Gly201; that span reads HLD. The interval 170 to 184 is gating helix loop; regulates binding affinity for substrates and thus substrate selectivity; it reads IGDTGHRAADIKASA. His226 lines the Zn(2+) pocket. Positions 229, 253, and 310 each coordinate a purine D-ribonucleoside. Zn(2+) is bound at residue Asp310.

The protein belongs to the metallo-dependent hydrolases superfamily. Adenosine and AMP deaminases family. Zn(2+) serves as cofactor.

The enzyme catalyses adenosine + H2O + H(+) = inosine + NH4(+). It carries out the reaction S-methyl-5'-thioadenosine + H2O + H(+) = S-methyl-5'-thioinosine + NH4(+). Its pathway is purine metabolism; purine nucleoside salvage. With respect to regulation, inhibited by coformycin and methylthiocoformycin (MT-coformycin). Functionally, catalyzes the hydrolytic deamination of adenosine to produce inosine. Unlike mammalian adenosine deaminases, also catalyzes the deamination of 5'-methylthioadenosine (MTA), a by-product of polyamine biosynthesis, to produce 5'-methylthioinosine (MTI). Plays an essential role in the purine salvage pathway which allows the parasite to use host cell purines for the synthesis of nucleic acids. This Plasmodium knowlesi protein is Adenosine deaminase.